The following is a 62-amino-acid chain: MGELAASANHGHSPCYPERKGTPGDLSKRKMLVHFYPRRHSHPRATQQWILKNKTLCRRIKE.

The interval 1-26 (MGELAASANHGHSPCYPERKGTPGDL) is disordered. A compositionally biased stretch (basic and acidic residues) spans 17–26 (PERKGTPGDL).

This is an uncharacterized protein from Homo sapiens (Human).